A 291-amino-acid polypeptide reads, in one-letter code: 3-methylcatechol 2,3-dioxygenase (291 aa).

2 consecutive VOC domains span residues 5–119 (RLGY…IYYG) and 143–264 (GLGH…YGWG). Residues histidine 146, histidine 210, and glutamate 260 each contribute to the Fe cation site.

Belongs to the extradiol ring-cleavage dioxygenase family. Homooctamer. Requires Fe(2+) as cofactor.

It carries out the reaction 3-methylcatechol + O2 = 2-hydroxy-6-oxo-2,4-heptadienoate + H(+). The protein operates within xenobiotic degradation; toluene degradation. The protein is 3-methylcatechol 2,3-dioxygenase (todE) of Pseudomonas putida (strain ATCC 700007 / DSM 6899 / JCM 31910 / BCRC 17059 / LMG 24140 / F1).